The chain runs to 100 residues: Large ribosomal subunit protein bL27 (100 aa).

Positions 1–13 are excised as a propeptide; the sequence is MNKLYWLTDLQLF. Basic and acidic residues predominate over residues 18–29; the sequence is GVDSSKNGRDSN. Positions 18-39 are disordered; sequence GVDSSKNGRDSNPKYLGAKLGD.

It belongs to the bacterial ribosomal protein bL27 family. Post-translationally, the N-terminus is cleaved by ribosomal processing cysteine protease Prp.

In Ureaplasma urealyticum serovar 10 (strain ATCC 33699 / Western), this protein is Large ribosomal subunit protein bL27.